Consider the following 494-residue polypeptide: 4-trimethylaminobutyraldehyde dehydrogenase (494 aa).

N-acetylserine is present on S2. K30 carries the post-translational modification N6-acetyllysine; alternate. K30 carries the post-translational modification N6-succinyllysine; alternate. K59 is modified (N6-succinyllysine). NAD(+) is bound by residues K180 and 232 to 236 (GSVPT). E254 functions as the Proton acceptor in the catalytic mechanism. C288 (nucleophile) is an active-site residue. K298 is subject to N6-acetyllysine. At K303 the chain carries N6-acetyllysine; alternate. Position 303 is an N6-succinyllysine; alternate (K303). N6-acetyllysine is present on K344. An NAD(+)-binding site is contributed by E391.

The protein belongs to the aldehyde dehydrogenase family. As to quaternary structure, homotetramer.

Its subcellular location is the cytoplasm. It is found in the cytosol. It catalyses the reaction 4-(trimethylamino)butanal + NAD(+) + H2O = 4-(trimethylamino)butanoate + NADH + 2 H(+). It carries out the reaction an aldehyde + NAD(+) + H2O = a carboxylate + NADH + 2 H(+). The catalysed reaction is 4-aminobutanal + NAD(+) + H2O = 4-aminobutanoate + NADH + 2 H(+). The enzyme catalyses formaldehyde + NAD(+) + H2O = formate + NADH + 2 H(+). It catalyses the reaction acetaldehyde + NAD(+) + H2O = acetate + NADH + 2 H(+). It carries out the reaction imidazole-4-acetaldehyde + NAD(+) + H2O = imidazole-4-acetate + NADH + 2 H(+). The catalysed reaction is acrolein + NAD(+) + H2O = acrylate + NADH + 2 H(+). The enzyme catalyses (5-hydroxyindol-3-yl)acetaldehyde + NAD(+) + H2O = (5-hydroxyindol-3-yl)acetate + NADH + 2 H(+). It catalyses the reaction 3,4-dihydroxyphenylacetaldehyde + NAD(+) + H2O = 3,4-dihydroxyphenylacetate + NADH + 2 H(+). It carries out the reaction spermine monoaldehyde + NAD(+) + H2O = N-(2-carboxyethyl)spermidine + NADH + 2 H(+). The catalysed reaction is propanal + NAD(+) + H2O = propanoate + NADH + 2 H(+). The enzyme catalyses butanal + NAD(+) + H2O = butanoate + NADH + 2 H(+). It catalyses the reaction pentanal + NAD(+) + H2O = pentanoate + NADH + 2 H(+). It carries out the reaction hexanal + NAD(+) + H2O = hexanoate + NADH + 2 H(+). It functions in the pathway amine and polyamine biosynthesis; carnitine biosynthesis. In terms of biological role, converts gamma-trimethylaminobutyraldehyde into gamma-butyrobetaine with high efficiency (in vitro). Can catalyze the irreversible oxidation of a broad range of aldehydes to the corresponding acids in an NAD-dependent reaction, but with low efficiency. Catalyzes the oxidation of aldehydes arising from biogenic amines and polyamines. This Sus scrofa (Pig) protein is 4-trimethylaminobutyraldehyde dehydrogenase (ALDH9A1).